The sequence spans 161 residues: Photosystem I reaction center subunit XI (161 aa).

Helical transmembrane passes span 84–104 (LIST…YGLV) and 126–146 (FTGG…FLLE).

Belongs to the PsaL family.

It localises to the cellular thylakoid membrane. This chain is Photosystem I reaction center subunit XI, found in Trichodesmium erythraeum (strain IMS101).